We begin with the raw amino-acid sequence, 553 residues long: Solute carrier family 22 member 2 (553 aa).

Residues Met-1–Thr-21 lie on the Cytoplasmic side of the membrane. The helical transmembrane segment at Phe-22–Leu-42 threads the bilayer. The Extracellular segment spans residues Gly-43–Asp-150. An N-linked (GlcNAc...) asparagine glycan is attached at Asn-71. The helical transmembrane segment at Leu-151–Ala-171 threads the bilayer. The Cytoplasmic segment spans residues Asp-172–Lys-177. The chain crosses the membrane as a helical span at residues Phe-178–Pro-198. The Extracellular portion of the chain corresponds to Asn-199 to Gln-210. The chain crosses the membrane as a helical span at residues Gly-211–Leu-231. The Cytoplasmic segment spans residues Gly-232–Gly-238. A helical transmembrane segment spans residues Ile-239–Leu-259. The Extracellular portion of the chain corresponds to Pro-260–Arg-263. The helical transmembrane segment at Trp-264–Pro-284 threads the bilayer. The short motif at Pro-284–Arg-288 is the Proline-rich sequence element. The Cytoplasmic portion of the chain corresponds to Glu-285–Thr-348. Residues Leu-349–Met-369 form a helical membrane-spanning segment. The Extracellular segment spans residues Gly-370 to Asn-375. A helical membrane pass occupies residues Ile-376–Leu-396. Residues Thr-397–Arg-404 are Cytoplasmic-facing. The chain crosses the membrane as a helical span at residues Tyr-405–Pro-425. Over Asp-426–Lys-432 the chain is Extracellular. Residues Ile-433–Val-453 form a helical membrane-spanning segment. At Asn-454–Asn-464 the chain is on the cytoplasmic side. Residues Leu-465 to Val-485 traverse the membrane as a helical segment. At Tyr-486–Glu-494 the chain is on the extracellular side. Residues Phe-495 to Pro-515 traverse the membrane as a helical segment. Residues Glu-516–Ser-553 are Cytoplasmic-facing.

This sequence belongs to the major facilitator (TC 2.A.1) superfamily. Organic cation transporter (TC 2.A.1.19) family. Post-translationally, tyrosine phosphorylated by tyrosine-protein kinase YES1. As to expression, expressed in kidney and ureter. To a lower extent, also expressed in brain and embryo.

The protein localises to the basolateral cell membrane. It is found in the basal cell membrane. The protein resides in the apical cell membrane. It catalyses the reaction (R)-noradrenaline(out) = (R)-noradrenaline(in). The enzyme catalyses (R)-adrenaline(out) = (R)-adrenaline(in). It carries out the reaction serotonin(out) = serotonin(in). The catalysed reaction is dopamine(out) = dopamine(in). It catalyses the reaction histamine(out) = histamine(in). The enzyme catalyses thiamine(in) = thiamine(out). It carries out the reaction creatinine(in) = creatinine(out). The catalysed reaction is 1-methylnicotinamide(out) = 1-methylnicotinamide(in). It catalyses the reaction guanidine(out) = guanidine(in). The enzyme catalyses choline(out) = choline(in). It carries out the reaction agmatine(out) = agmatine(in). The catalysed reaction is putrescine(out) = putrescine(in). It catalyses the reaction spermidine(in) = spermidine(out). The enzyme catalyses tyramine(in) = tyramine(out). It carries out the reaction L-histidyl-L-proline diketopiperazine(in) = L-histidyl-L-proline diketopiperazine(out). The catalysed reaction is (R)-salsolinol(in) = (R)-salsolinol(out). It catalyses the reaction N-methyl-(R)-salsolinol(in) = N-methyl-(R)-salsolinol(out). The enzyme catalyses acetylcholine(in) = acetylcholine(out). It carries out the reaction prostaglandin F2alpha(out) = prostaglandin F2alpha(in). The catalysed reaction is prostaglandin E2(out) = prostaglandin E2(in). Tyrosine phosphorylation of the transporter leads to activation of the transport activity. TEA uptake is activated by tyrosine phosphorylation. Inhibited by cGMP, most likely through a cGMP-binding protein that interacts with OCT2. In terms of biological role, electrogenic voltage-dependent transporter that mediates the transport of a variety of organic cations such as endogenous bioactive amines, cationic drugs and xenobiotics. Functions as a Na(+)-independent, bidirectional uniporter. Cation cellular uptake or release is driven by the electrochemical potential, i.e. membrane potential and concentration gradient. However, may also engage electroneutral cation exchange when saturating concentrations of cation substrates are reached. Predominantly expressed at the basolateral membrane of hepatocytes and proximal tubules and involved in the uptake and disposition of cationic compounds by hepatic and renal clearance from the blood flow. Implicated in monoamine neurotransmitters uptake such as histamine, dopamine, adrenaline/epinephrine, noradrenaline/norepinephrine, serotonin and tyramine, thereby supporting a physiological role in the central nervous system by regulating interstitial concentrations of neurotransmitters. Also capable of transporting dopaminergic neuromodulators cyclo(his-pro), salsolinol and N-methyl-salsolinol, thereby involved in the maintenance of dopaminergic cell integrity in the central nervous system. Mediates the bidirectional transport of acetylcholine (ACh) at the apical membrane of ciliated cell in airway epithelium, thereby playing a role in luminal release of ACh from bronchial epithelium. Also transports guanidine and endogenous monoamines such as vitamin B1/thiamine, creatinine and N-1-methylnicotinamide (NMN). Mediates the uptake and efflux of quaternary ammonium compound choline. Mediates the bidirectional transport of polyamine agmatine and the uptake of polyamines putrescine and spermidine. Able to transport non-amine endogenous compounds such as prostaglandin E2 (PGE2) and prostaglandin F2-alpha (PGF2-alpha). Also involved in the uptake of xenobiotic 4-(4-(dimethylamino)styryl)-N-methylpyridinium (ASP). May contribute to regulate the transport of organic compounds in testis across the blood-testis-barrier. The polypeptide is Solute carrier family 22 member 2 (Mus musculus (Mouse)).